The sequence spans 1337 residues: GTPase activating protein homolog 3 (1337 aa).

An F-BAR domain is found at 14-264 (PESFADLWDG…LINSINNEDE (251 aa)). 2 disordered regions span residues 279 to 328 (PKPF…LPIF) and 345 to 392 (ITNS…RFST). The segment covering 293–302 (TPPPPPPPQI) has biased composition (pro residues). Positions 345–358 (ITNSLSLSSDSLQT) are enriched in polar residues. The 190-residue stretch at 422-611 (CKIEDIMVAQ…NIIEHFKPLQ (190 aa)) folds into the Rho-GAP domain. Disordered stretches follow at residues 612–689 (VNDS…TTNT), 733–781 (VNNN…HTVA), and 794–821 (ITTP…SPSE). Composition is skewed to low complexity over residues 621-637 (SSSS…SIES), 645-687 (SSTN…SSTT), and 734-772 (NNNN…QQVS). The stretch at 830 to 859 (YLEDQERCKQRIDELHTQVNELYSDITTIE) forms a coiled coil. Disordered stretches follow at residues 1041 to 1102 (SDPD…INNS) and 1114 to 1166 (KSAL…AHAI). The segment covering 1047-1063 (SPPTISNTTNRLLNTSG) has biased composition (polar residues). Composition is skewed to low complexity over residues 1064-1102 (STDF…INNS) and 1114-1159 (KSAL…TTTN). A coiled-coil region spans residues 1189-1219 (LEINNKLHSQLTEELKKKQQQYKQLIFDIID).

The protein resides in the cytoplasm. Its subcellular location is the contractile vacuole. Rho GTPase-activating protein involved in the signal transduction pathway. The chain is GTPase activating protein homolog 3 (mgp3) from Dictyostelium discoideum (Social amoeba).